The sequence spans 434 residues: Serine hydroxymethyltransferase (434 aa).

Residue 120-122 coordinates (6S)-5,6,7,8-tetrahydrofolate; it reads GHI. N6-(pyridoxal phosphate)lysine is present on K236. E255 provides a ligand contact to (6S)-5,6,7,8-tetrahydrofolate.

This sequence belongs to the SHMT family. In terms of assembly, homodimer. Pyridoxal 5'-phosphate is required as a cofactor.

Its subcellular location is the cytoplasm. It functions in the pathway amino-acid biosynthesis; glycine biosynthesis; glycine from L-serine: step 1/1. In terms of biological role, catalyzes the reversible interconversion of serine and glycine with a modified folate serving as the one-carbon carrier. Also exhibits a pteridine-independent aldolase activity toward beta-hydroxyamino acids, producing glycine and aldehydes, via a retro-aldol mechanism. The protein is Serine hydroxymethyltransferase of Korarchaeum cryptofilum (strain OPF8).